Consider the following 322-residue polypeptide: Nitrilase (322 aa).

The CN hydrolase domain maps to 5–283 (VRVGAVQSEP…EAILTADIDL (279 aa)). Residue glutamate 45 is the Proton acceptor of the active site. The active site involves lysine 127. The active-site Nucleophile is the cysteine 162.

This sequence belongs to the carbon-nitrogen hydrolase superfamily. Nitrilase family.

The enzyme catalyses a nitrile + 2 H2O = a carboxylate + NH4(+). Nitrilase that hydrolyzes preferentially 4-cyanopyridine. The sequence is that of Nitrilase from Talaromyces marneffei (strain ATCC 18224 / CBS 334.59 / QM 7333) (Penicillium marneffei).